Consider the following 527-residue polypeptide: Bifunctional purine biosynthesis protein PurH (527 aa).

Residues 1–149 form the MGS-like domain; that stretch reads MASDFLPVRR…KNFARVAVAT (149 aa).

Belongs to the PurH family.

It catalyses the reaction (6R)-10-formyltetrahydrofolate + 5-amino-1-(5-phospho-beta-D-ribosyl)imidazole-4-carboxamide = 5-formamido-1-(5-phospho-D-ribosyl)imidazole-4-carboxamide + (6S)-5,6,7,8-tetrahydrofolate. It carries out the reaction IMP + H2O = 5-formamido-1-(5-phospho-D-ribosyl)imidazole-4-carboxamide. The protein operates within purine metabolism; IMP biosynthesis via de novo pathway; 5-formamido-1-(5-phospho-D-ribosyl)imidazole-4-carboxamide from 5-amino-1-(5-phospho-D-ribosyl)imidazole-4-carboxamide (10-formyl THF route): step 1/1. Its pathway is purine metabolism; IMP biosynthesis via de novo pathway; IMP from 5-formamido-1-(5-phospho-D-ribosyl)imidazole-4-carboxamide: step 1/1. This chain is Bifunctional purine biosynthesis protein PurH, found in Xanthomonas campestris pv. campestris (strain 8004).